Here is a 257-residue protein sequence, read N- to C-terminus: Deoxyribose-phosphate aldolase (257 aa).

Catalysis depends on aspartate 102, which acts as the Proton donor/acceptor. Lysine 166 serves as the catalytic Schiff-base intermediate with acetaldehyde. Lysine 198 acts as the Proton donor/acceptor in catalysis.

It belongs to the DeoC/FbaB aldolase family. DeoC type 2 subfamily.

It is found in the cytoplasm. The enzyme catalyses 2-deoxy-D-ribose 5-phosphate = D-glyceraldehyde 3-phosphate + acetaldehyde. It participates in carbohydrate degradation; 2-deoxy-D-ribose 1-phosphate degradation; D-glyceraldehyde 3-phosphate and acetaldehyde from 2-deoxy-alpha-D-ribose 1-phosphate: step 2/2. Functionally, catalyzes a reversible aldol reaction between acetaldehyde and D-glyceraldehyde 3-phosphate to generate 2-deoxy-D-ribose 5-phosphate. This Shewanella sediminis (strain HAW-EB3) protein is Deoxyribose-phosphate aldolase.